The sequence spans 669 residues: Collagen alpha-1(II) chain (669 aa).

4-hydroxyproline is present on residues proline 3 and proline 12. Positions 318–327 (XXXXXXXGAP) are enriched in low complexity. 3 disordered regions span residues 318 to 360 (XXXX…XXXX), 405 to 438 (XXXX…XXXX), and 638 to 669 (XXGF…AGPR). A 4-hydroxyproline mark is found at proline 336 and proline 345. 2 stretches are compositionally biased toward low complexity: residues 339-360 (AGFA…XXXX) and 405-420 (XXXX…NGNP). Proline 413 bears the 3-hydroxyproline mark. Proline 414, proline 420, and proline 426 each carry 4-hydroxyproline. 2 stretches are compositionally biased toward low complexity: residues 429–438 (AGKXXXXXXX) and 638–647 (XXGFTGLQGL). The residue at position 648 (proline 648) is a 4-hydroxyproline. Proline 650 is subject to 3-hydroxyproline.

Belongs to the fibrillar collagen family. Homotrimers of alpha 1(II) chains. In terms of processing, contains mostly 4-hydroxyproline. Prolines at the third position of the tripeptide repeating unit (G-X-P) are 4-hydroxylated in some or all of the chains. Contains 3-hydroxyproline at a few sites. This modification occurs on the first proline residue in the sequence motif Gly-Pro-Hyp, where Hyp is 4-hydroxyproline.

Its subcellular location is the secreted. It is found in the extracellular space. It localises to the extracellular matrix. In terms of biological role, type II collagen is specific for cartilaginous tissues. It is essential for the normal embryonic development of the skeleton, for linear growth and for the ability of cartilage to resist compressive forces. The protein is Collagen alpha-1(II) chain of Mammut americanum (American mastodon).